We begin with the raw amino-acid sequence, 190 residues long: Lipid A acyltransferase PagP (190 aa).

Positions 1–29 are cleaved as a signal peptide; the sequence is MYVAMIIRKYFLIIALLLMPWLAIPSVSA. Catalysis depends on residues His-62, Asp-105, and Ser-106.

Belongs to the lipid A palmitoyltransferase family. Homodimer.

It is found in the cell outer membrane. It carries out the reaction a lipid A + a 1,2-diacyl-sn-glycero-3-phosphocholine = a hepta-acyl lipid A + a 2-acyl-sn-glycero-3-phosphocholine. The enzyme catalyses a lipid IVA + a 1,2-diacyl-sn-glycero-3-phosphocholine = a lipid IVB + a 2-acyl-sn-glycero-3-phosphocholine. The catalysed reaction is a lipid IIA + a 1,2-diacyl-sn-glycero-3-phosphocholine = a lipid IIB + a 2-acyl-sn-glycero-3-phosphocholine. Its function is as follows. Transfers a fatty acid residue from the sn-1 position of a phospholipid to the N-linked hydroxyfatty acid chain on the proximal unit of lipid A or its precursors. Required for resistance to cationic antimicrobial peptides (CAMPs). Modifications of lipid A with an acyl chain allow to evade host immune defenses by resisting antimicrobial peptides and attenuating the inflammatory response to infection triggered by lipopolysaccharide through the Toll-like receptor 4 (TLR4) signal transduction pathway. This chain is Lipid A acyltransferase PagP, found in Salmonella typhimurium (strain LT2 / SGSC1412 / ATCC 700720).